The sequence spans 584 residues: DNA ligase (584 aa).

Position 249 (glutamate 249) interacts with ATP. The active-site N6-AMP-lysine intermediate is lysine 251. ATP contacts are provided by arginine 256, arginine 271, glutamate 301, phenylalanine 341, arginine 416, and lysine 422.

The protein belongs to the ATP-dependent DNA ligase family. It depends on Mg(2+) as a cofactor.

The enzyme catalyses ATP + (deoxyribonucleotide)n-3'-hydroxyl + 5'-phospho-(deoxyribonucleotide)m = (deoxyribonucleotide)n+m + AMP + diphosphate.. Its function is as follows. DNA ligase that seals nicks in double-stranded DNA during DNA replication, DNA recombination and DNA repair. The polypeptide is DNA ligase (Pyrobaculum arsenaticum (strain DSM 13514 / JCM 11321 / PZ6)).